The primary structure comprises 245 residues: Enolase-phosphatase E1 (245 aa).

This sequence belongs to the HAD-like hydrolase superfamily. MasA/MtnC family. As to quaternary structure, monomer. The cofactor is Mg(2+).

It carries out the reaction 5-methylsulfanyl-2,3-dioxopentyl phosphate + H2O = 1,2-dihydroxy-5-(methylsulfanyl)pent-1-en-3-one + phosphate. The protein operates within amino-acid biosynthesis; L-methionine biosynthesis via salvage pathway; L-methionine from S-methyl-5-thio-alpha-D-ribose 1-phosphate: step 3/6. It participates in amino-acid biosynthesis; L-methionine biosynthesis via salvage pathway; L-methionine from S-methyl-5-thio-alpha-D-ribose 1-phosphate: step 4/6. Functionally, bifunctional enzyme that catalyzes the enolization of 2,3-diketo-5-methylthiopentyl-1-phosphate (DK-MTP-1-P) into the intermediate 2-hydroxy-3-keto-5-methylthiopentenyl-1-phosphate (HK-MTPenyl-1-P), which is then dephosphorylated to form the acireductone 1,2-dihydroxy-3-keto-5-methylthiopentene (DHK-MTPene). The polypeptide is Enolase-phosphatase E1 (Prochlorococcus marinus (strain MIT 9313)).